The chain runs to 205 residues: Holliday junction branch migration complex subunit RuvA (205 aa).

The domain I stretch occupies residues 1–62; it reads MFEYVTGYVE…EDIMALYGFK (62 aa). The tract at residues 63 to 141 is domain II; that stretch reads TREERLLFTK…DVVPDAFVDL (79 aa). A flexible linker region spans residues 142–152; sequence FSDTERFDEKK. Residues 153–205 form a domain III region; the sequence is GSSAELDEALEALRALGYAEREVSRVVPELLKESLTTDQYIKKALSLLLNGKR.

Belongs to the RuvA family. As to quaternary structure, homotetramer. Forms an RuvA(8)-RuvB(12)-Holliday junction (HJ) complex. HJ DNA is sandwiched between 2 RuvA tetramers; dsDNA enters through RuvA and exits via RuvB. An RuvB hexamer assembles on each DNA strand where it exits the tetramer. Each RuvB hexamer is contacted by two RuvA subunits (via domain III) on 2 adjacent RuvB subunits; this complex drives branch migration. In the full resolvosome a probable DNA-RuvA(4)-RuvB(12)-RuvC(2) complex forms which resolves the HJ.

The protein localises to the cytoplasm. Functionally, the RuvA-RuvB-RuvC complex processes Holliday junction (HJ) DNA during genetic recombination and DNA repair, while the RuvA-RuvB complex plays an important role in the rescue of blocked DNA replication forks via replication fork reversal (RFR). RuvA specifically binds to HJ cruciform DNA, conferring on it an open structure. The RuvB hexamer acts as an ATP-dependent pump, pulling dsDNA into and through the RuvAB complex. HJ branch migration allows RuvC to scan DNA until it finds its consensus sequence, where it cleaves and resolves the cruciform DNA. The polypeptide is Holliday junction branch migration complex subunit RuvA (Bacillus cereus (strain ATCC 14579 / DSM 31 / CCUG 7414 / JCM 2152 / NBRC 15305 / NCIMB 9373 / NCTC 2599 / NRRL B-3711)).